Reading from the N-terminus, the 148-residue chain is Large-conductance mechanosensitive channel (148 aa).

Transmembrane regions (helical) follow at residues 9–29 and 79–99; these read AFAV…GAAF and IQTV…VKAI.

The protein belongs to the MscL family. Homopentamer.

It localises to the cell inner membrane. Functionally, channel that opens in response to stretch forces in the membrane lipid bilayer. May participate in the regulation of osmotic pressure changes within the cell. This chain is Large-conductance mechanosensitive channel, found in Pseudomonas syringae pv. syringae (strain B728a).